Consider the following 132-residue polypeptide: Fatty acid-binding protein, brain (132 aa).

The residue at position 2 (valine 2) is an N-acetylvaline. 127 to 129 contacts a fatty acid; it reads RHY.

Belongs to the calycin superfamily. Fatty-acid binding protein (FABP) family. As to quaternary structure, monomer.

The protein localises to the cytoplasm. FABPs are thought to play a role in the intracellular transport of long-chain fatty acids and their acyl-CoA esters. Binds oleic and palmitic acids but not palmitoyl CoA. The sequence is that of Fatty acid-binding protein, brain (FABP7) from Bos taurus (Bovine).